Reading from the N-terminus, the 546-residue chain is CTP synthase (546 aa).

Residues 1 to 265 (MTKYVFVTGG…DEIVCHKLNI (265 aa)) are amidoligase domain. S13 provides a ligand contact to CTP. Residue S13 coordinates UTP. Residues 14–19 (SLGKGI) and D71 contribute to the ATP site. Mg(2+) is bound by residues D71 and E139. CTP-binding positions include 146–148 (DIE), 186–191 (KTKPTQ), and K222. UTP-binding positions include 186–191 (KTKPTQ) and K222. The 254-residue stretch at 290-543 (KIAFVGKYVD…VKAALANQKA (254 aa)) folds into the Glutamine amidotransferase type-1 domain. Position 351 (G351) interacts with L-glutamine. Residue C378 is the Nucleophile; for glutamine hydrolysis of the active site. Residues 379-382 (LGMQ), E402, and R469 contribute to the L-glutamine site. Catalysis depends on residues H516 and E518.

It belongs to the CTP synthase family. Homotetramer.

The catalysed reaction is UTP + L-glutamine + ATP + H2O = CTP + L-glutamate + ADP + phosphate + 2 H(+). The enzyme catalyses L-glutamine + H2O = L-glutamate + NH4(+). It catalyses the reaction UTP + NH4(+) + ATP = CTP + ADP + phosphate + 2 H(+). Its pathway is pyrimidine metabolism; CTP biosynthesis via de novo pathway; CTP from UDP: step 2/2. Allosterically activated by GTP, when glutamine is the substrate; GTP has no effect on the reaction when ammonia is the substrate. The allosteric effector GTP functions by stabilizing the protein conformation that binds the tetrahedral intermediate(s) formed during glutamine hydrolysis. Inhibited by the product CTP, via allosteric rather than competitive inhibition. Its function is as follows. Catalyzes the ATP-dependent amination of UTP to CTP with either L-glutamine or ammonia as the source of nitrogen. Regulates intracellular CTP levels through interactions with the four ribonucleotide triphosphates. The protein is CTP synthase of Dechloromonas aromatica (strain RCB).